Consider the following 91-residue polypeptide: Small ribosomal subunit protein uS19 (91 aa).

The protein belongs to the universal ribosomal protein uS19 family.

In terms of biological role, protein S19 forms a complex with S13 that binds strongly to the 16S ribosomal RNA. The polypeptide is Small ribosomal subunit protein uS19 (Neorickettsia sennetsu (strain ATCC VR-367 / Miyayama) (Ehrlichia sennetsu)).